Consider the following 95-residue polypeptide: Aspartyl/glutamyl-tRNA(Asn/Gln) amidotransferase subunit C (95 aa).

The protein belongs to the GatC family. As to quaternary structure, heterotrimer of A, B and C subunits.

The catalysed reaction is L-glutamyl-tRNA(Gln) + L-glutamine + ATP + H2O = L-glutaminyl-tRNA(Gln) + L-glutamate + ADP + phosphate + H(+). The enzyme catalyses L-aspartyl-tRNA(Asn) + L-glutamine + ATP + H2O = L-asparaginyl-tRNA(Asn) + L-glutamate + ADP + phosphate + 2 H(+). Functionally, allows the formation of correctly charged Asn-tRNA(Asn) or Gln-tRNA(Gln) through the transamidation of misacylated Asp-tRNA(Asn) or Glu-tRNA(Gln) in organisms which lack either or both of asparaginyl-tRNA or glutaminyl-tRNA synthetases. The reaction takes place in the presence of glutamine and ATP through an activated phospho-Asp-tRNA(Asn) or phospho-Glu-tRNA(Gln). This chain is Aspartyl/glutamyl-tRNA(Asn/Gln) amidotransferase subunit C, found in Chlorobium phaeobacteroides (strain DSM 266 / SMG 266 / 2430).